We begin with the raw amino-acid sequence, 137 residues long: Large ribosomal subunit protein uL16 (137 aa).

This sequence belongs to the universal ribosomal protein uL16 family. Part of the 50S ribosomal subunit.

In terms of biological role, binds 23S rRNA and is also seen to make contacts with the A and possibly P site tRNAs. The protein is Large ribosomal subunit protein uL16 of Leptospira biflexa serovar Patoc (strain Patoc 1 / Ames).